Here is a 1349-residue protein sequence, read N- to C-terminus: Protein turtle homolog B (1349 aa).

An N-terminal signal peptide occupies residues 1–20; sequence MIWYVATFIASVIGTRGLAA. The Extracellular portion of the chain corresponds to 21–722; the sequence is EGAHGLREEP…DLTEDGLARP (702 aa). Ig-like domains are found at residues 24-129, 139-226, 228-320, 324-415, and 420-504; these read HGLR…HNGS, PTFT…LLVQ, PPFI…AYLT, PARV…ARLV, and PYFT…THLT. Intrachain disulfides connect C45–C113 and C161–C208. Residues N241 and N258 are each glycosylated (N-linked (GlcNAc...) asparagine). 3 disulfide bridges follow: C250–C303, C346–C397, and C442–C488. 2 consecutive Fibronectin type-III domains span residues 512–604 and 614–708; these read APGS…TLAF and LVTP…STDI. N-linked (GlcNAc...) asparagine glycosylation occurs at N624. A helical membrane pass occupies residues 723–743; that stretch reads VLAGIVATICFLAAAILFSTL. At 744–1349 the chain is on the cytoplasmic side; it reads AACFVNKQRK…SPPERALSKL (606 aa). Disordered stretches follow at residues 758 to 817, 911 to 1081, and 1099 to 1349; these read RKKD…EKEL, QLTP…RGLP, and APKG…LSKL. Phosphoserine occurs at positions 775, 783, and 794. Residues 911–921 show a composition bias toward polar residues; that stretch reads QLTPLSSSQES. Residues 985 to 998 show a composition bias toward low complexity; the sequence is VPEVGSPLSSVMSS. Composition is skewed to polar residues over residues 1018–1033, 1129–1141, and 1199–1214; these read ENASNSTLPLTQTPTG, LVSQGQLRHTSQG, and SRLSPLTQSPLSSRTG. R1136 bears the Omega-N-methylarginine mark. S1207 and S1215 each carry phosphoserine. Low complexity predominate over residues 1251 to 1271; sequence STPSTGSPSQSSRSGSPSYRP. Pro residues predominate over residues 1283–1292; that stretch reads PSPPPGPAPA.

It belongs to the immunoglobulin superfamily. Turtle family. Found in a complex with MAGI2 and NLGN2, where it interacts with MAGI2 (via PDZ 5 and PDZ 6 domains). Post-translationally, N-glycosylated and sialylated. Not significantly O-glycosylated.

It is found in the postsynaptic cell membrane. It localises to the postsynaptic density. Transmembrane protein which is abundantly expressed in interneurons, where it may regulate inhibitory synapse development. May mediate homophilic cell adhesion. The protein is Protein turtle homolog B (IGSF9B) of Homo sapiens (Human).